A 346-amino-acid chain; its full sequence is Parapinopsin (346 aa).

Residues 1-29 are Extracellular-facing; it reads MASIILINFSETDTLHLGSVNDHIMPRIG. Asn-8 carries an N-linked (GlcNAc...) asparagine glycan. The helical transmembrane segment at 30 to 54 threads the bilayer; the sequence is YTILSIIMALSSTFGIILNMVVIIV. The Cytoplasmic portion of the chain corresponds to 55–66; the sequence is TVRYKQLRQPLN. The chain crosses the membrane as a helical span at residues 67 to 91; the sequence is YALVNLAVADLGCPVFGGLLTAVTN. The Extracellular portion of the chain corresponds to 92 to 106; sequence AMGYFSLGRVGCVLE. Cys-103 and Cys-180 are oxidised to a cystine. The helical transmembrane segment at 107-126 threads the bilayer; that stretch reads GFAVAFFGIAGLCSVAVIAV. Residues 127 to 145 are Cytoplasmic-facing; it reads DRYMVVCRPLGAVMFQTKH. The chain crosses the membrane as a helical span at residues 146–169; that stretch reads ALAGVVFSWVWSFIWNTPPLFGWG. Residues 170–193 are Extracellular-facing; sequence SYQLEGVMTSCAPNWYRRDPVNVS. The N-linked (GlcNAc...) asparagine glycan is linked to Asn-191. Residues 194-221 traverse the membrane as a helical segment; the sequence is YILCYFMLCFALPFATIIFSYMHLLHTL. Topologically, residues 222-244 are cytoplasmic; that stretch reads WQVAKLQVADSGSTAKVEVQVAR. Residues 245–268 traverse the membrane as a helical segment; sequence MVVIMVMAFLLTWLPYAAFALTVI. The Extracellular portion of the chain corresponds to 269 to 276; that stretch reads IDSNIYIN. A helical transmembrane segment spans residues 277–301; sequence PVIGTIPAYLAKSSTVFNPIIYIFM. Residue Lys-288 is modified to N6-(retinylidene)lysine. The Cytoplasmic segment spans residues 302–346; it reads NRQFRDYALPCLLCGKNPWAAKEGRDSDTNTLTTTVSKNTSVSPL. The S-palmitoyl cysteine moiety is linked to residue Cys-315. Positions 325–346 are disordered; that stretch reads GRDSDTNTLTTTVSKNTSVSPL. Low complexity predominate over residues 330–346; that stretch reads TNTLTTTVSKNTSVSPL.

It belongs to the G-protein coupled receptor 1 family. Opsin subfamily. Phosphorylated on some or all of the serine and threonine residues present in the C-terminal region. As to expression, parapineal organ.

The protein resides in the membrane. This Ictalurus punctatus (Channel catfish) protein is Parapinopsin.